Reading from the N-terminus, the 313-residue chain is MPDKAGRKMQVAIVGSGNISTDLLYKLLRSEWLEPRWMIGIDPQSEGLARARTLGLETSHEGVDWLLARDELPDMVFEATSAYVHRDAAPRYAEAGIRAIDLTPAAVGPGVIPPANLREHLDAPNVNLVTCGGQATIPMVHAVSRVVGVPYAEIVASVSSASAGPGTRANIDEFTKTTSKGVETIGGARRGKAIIILNPADPPMIMRDTIFCAIPEDADQDAITASIKEVVAQVQTYVPGYRLLNEPQFDPPSVNSGGQALVTTFVEVEGAGDYLPPYAGNLDIMTAAATKVGEEIAAKLAGASLSASSGGRS.

Residue 16–19 (SGNI) participates in NAD(+) binding. The Acyl-thioester intermediate role is filled by Cys-131. Residues 162–170 (SAGPGTRAN) and Asn-281 contribute to the NAD(+) site.

It belongs to the acetaldehyde dehydrogenase family.

It carries out the reaction acetaldehyde + NAD(+) + CoA = acetyl-CoA + NADH + H(+). This is Acetaldehyde dehydrogenase 1 from Mycobacterium sp. (strain JLS).